Reading from the N-terminus, the 1544-residue chain is Zinc finger protein GLI2 (1544 aa).

The segment at 1 to 26 (METSAPAPALEKKEAKSGLLEDSSFP) is disordered. S145, S230, S232, and S238 each carry phosphoserine. Residues 338-364 (SSSSSNCLNDANQNKQNSESAVSSTVN) form a disordered region. At S385 the chain carries Phosphoserine; by DYRK2. A C2H2-type 1 zinc finger spans residues 417–444 (TNCHWADCTKEYDTQEQLVHHINNEHIH). The C2H2-type 2; degenerate zinc-finger motif lies at 455–477 (QACTREQKPFKAQYMLVVHMRRH). C2H2-type zinc fingers lie at residues 483–507 (HKCTFEGCSKAYSRLENLKTHLRSH), 513–538 (YVCEHEGCNKAFSNASDRAKHQNRTH), and 544–569 (YICKIPGCTKRYTDPSSLRKHVKTVH). Disordered regions lie at residues 557-619 (DPSS…TSHT) and 635-682 (GLCQ…ALAD). The segment covering 569 to 585 (HGPDAHVTKKQRNDVHV) has biased composition (basic and acidic residues). Low complexity predominate over residues 637–657 (CQSSPGAQSSCSSEPSPLGSA). A Phosphoserine modification is found at S707. T708 carries the post-translational modification Phosphothreonine. Position 740 is an N6-acetyllysine; by EP300 (K740). Disordered regions lie at residues 781 to 800 (SQLQERRDSSTSTMSSAYTV), 805 to 861 (SGIS…PGLL), 908 to 963 (ALPG…RRPD), 995 to 1016 (VQSHPSVDSNLTRNAYSPRPPS), 1166 to 1220 (FGQY…CLGM), and 1422 to 1457 (GGCPAVQPQPPQPQACSDSIQPEPLPSPGVNQVSST). Polar residues-rich tracts occupy residues 790–800 (STSTMSSAYTV) and 805–814 (SGISPYFSSR). The segment covering 954–963 (RASDPVRRPD) has biased composition (basic and acidic residues). S997 bears the Phosphoserine; by DYRK2 mark. 3 stretches are compositionally biased toward polar residues: residues 997–1009 (SHPSVDSNLTRNA), 1173–1190 (NPQSVQSSSGGLDSTQPH), and 1200–1209 (SRGSYTQQPR).

This sequence belongs to the GLI C2H2-type zinc-finger protein family. Interacts with ZIC1 and ZIC2. Interacts with STK36. Interacts with SUFU; this inhibits transcriptional activation mediated by GLI2. Interacts (via C-terminal internal region) with FOXC1 (via N-terminus); this interaction is direct and increases GLI2 DNA-binding and transcriptional activity through a smoothened (SMO)-independent Hedgehog (Hh) signaling pathway. In terms of processing, phosphorylated in vitro by ULK3. Phosphorylated by DYRK2; this inhibits GLI2 transcription factor activity and promotes proteasomal degradation of GLI2. Acetylation at Lys-740 inhibits Hh target gene expression, probably by impeding entry into chromatin thus preventing promoter occupancy.

The protein resides in the nucleus. The protein localises to the cytoplasm. Its subcellular location is the cell projection. It is found in the cilium. Its function is as follows. Functions as a transcription regulator in the hedgehog (Hh) pathway. Functions as a transcriptional activator. May also function as transcriptional repressor. Requires STK36 for full transcriptional activator activity. Binds to the DNA sequence 5'-GAACCACCCA-3' which is part of the TRE-2S regulatory element. Is involved in the smoothened (SHH) signaling pathway. Required for normal skeleton development. This chain is Zinc finger protein GLI2, found in Mus musculus (Mouse).